A 137-amino-acid polypeptide reads, in one-letter code: 15 kDa protein A (137 aa).

The first 20 residues, 1–20 (MAGVWKVLVVLVGLAVVACA), serve as a signal peptide directing secretion. Intrachain disulfides connect cysteine 77–cysteine 88 and cysteine 99–cysteine 116.

This sequence belongs to the cathelicidin family. As to expression, large granules of neutrophils.

The protein resides in the secreted. Functionally, binds to bacterial lipopolysaccharides (LPS), potentiates strongly the early antibacterial effects of BPI. Inhibits the late lethal action of BPI. In Oryctolagus cuniculus (Rabbit), this protein is 15 kDa protein A.